The following is a 341-amino-acid chain: MEHATPLAVPLGQAEVFQALQRLHMTIFSQSVSPCGKFLAAGNNYGQIAIFSLSAALSSEAKEESKKPMVTFHAHDGPVYSMVSTDRHLLSAGDGEVKGWLWAEILKKGCKELWRRQPPYRTSLEVPEINALLLVPKENSLILAGGDCQLHTMDLETGTFTRALRGHTDYIHCLALRERSPEVLSGGEDGAVRLWDLRIAKEVQTIEVYKHEECSRPHNGRWIGCLATDSDWMVCGGGPALTLWHLRSSTPTTVFPIRAPQKHVTFYQDLILSAGQGCCVNHWQLSGELKAQVPGSSPGLLSLSLNQQPAAPECKVLTASGNSCRVDVFTNLGYRAFSLSF.

WD repeat units follow at residues 22-61 (RLHM…SSEA), 74-112 (AHDG…GCKE), 124-163 (LEVP…FTRA), 166-205 (GHTD…EVQT), 215-254 (SRPH…PTTV), 256-293 (PIRA…KAQV), and 295-339 (GSSP…AFSL). At S180 the chain carries Phosphoserine.

Belongs to the WD repeat THOC6 family. As to quaternary structure, component of the THO subcomplex, which is composed of THOC1, THOC2, THOC3, THOC5, THOC6 and THOC7. The THO subcomplex interacts with DDX39B to form the THO-DDX39B complex which multimerizes into a 28-subunit tetrameric assembly. Component of the transcription/export (TREX) complex at least composed of ALYREF/THOC4, DDX39B, SARNP/CIP29, CHTOP and the THO subcomplex; in the complex interacts with THOC5; together with THOC5 and THOC7, plays a key structural role in the oligomerization of the THO-DDX39B complex. TREX seems to have a dynamic structure involving ATP-dependent remodeling.

Its subcellular location is the nucleus. It is found in the nucleus speckle. Component of the THO subcomplex of the TREX complex which is thought to couple mRNA transcription, processing and nuclear export, and which specifically associates with spliced mRNA and not with unspliced pre-mRNA. Plays a key structural role in the oligomerization of the THO-DDX39B complex. TREX is recruited to spliced mRNAs by a transcription-independent mechanism, binds to mRNA upstream of the exon-junction complex (EJC) and is recruited in a splicing- and cap-dependent manner to a region near the 5' end of the mRNA where it functions in mRNA export to the cytoplasm via the TAP/NXF1 pathway. Plays a role in apoptosis negative control involved in brain development. This is THO complex subunit 6 homolog (Thoc6) from Rattus norvegicus (Rat).